A 195-amino-acid chain; its full sequence is dTDP-4-dehydrorhamnose 3,5-epimerase (195 aa).

Residues R31, E36, 54 to 56, and R67 contribute to the substrate site; that span reads QDN. Catalysis depends on H70, which acts as the Proton acceptor. Substrate is bound by residues K80 and H127. Y140 serves as the catalytic Proton donor. 2 residues coordinate substrate: D151 and K176.

This sequence belongs to the dTDP-4-dehydrorhamnose 3,5-epimerase family. As to quaternary structure, homodimer.

The catalysed reaction is dTDP-4-dehydro-6-deoxy-alpha-D-glucose = dTDP-4-dehydro-beta-L-rhamnose. It functions in the pathway carbohydrate biosynthesis; dTDP-L-rhamnose biosynthesis. In terms of biological role, catalyzes the epimerization of the C3' and C5'positions of dTDP-6-deoxy-D-xylo-4-hexulose, forming dTDP-6-deoxy-L-lyxo-4-hexulose. The chain is dTDP-4-dehydrorhamnose 3,5-epimerase from Sinorhizobium fredii (strain NBRC 101917 / NGR234).